Consider the following 366-residue polypeptide: ATPase ASNA1 homolog (366 aa).

33–40 is an ATP binding site; sequence KGGVGKTT. The active site involves Asp62. The ATP site is built by Glu234 and Asn261.

The protein belongs to the arsA ATPase family. Homodimer.

It is found in the cytoplasm. It localises to the endoplasmic reticulum. ATPase required for the post-translational delivery of tail-anchored (TA) proteins to the endoplasmic reticulum. Recognizes and selectively binds the transmembrane domain of TA proteins in the cytosol. This complex then targets to the endoplasmic reticulum by membrane-bound receptors, where the tail-anchored protein is released for insertion. This process is regulated by ATP binding and hydrolysis. ATP binding drives the homodimer towards the closed dimer state, facilitating recognition of newly synthesized TA membrane proteins. ATP hydrolysis is required for insertion. Subsequently, the homodimer reverts towards the open dimer state, lowering its affinity for the membrane-bound receptor, and returning it to the cytosol to initiate a new round of targeting. The polypeptide is ATPase ASNA1 homolog (Cryptosporidium parvum (strain Iowa II)).